The sequence spans 307 residues: L-carnitine dehydrogenase (307 aa).

An NAD(+)-binding site is contributed by 8-13 (GTGVIG).

This sequence belongs to the 3-hydroxyacyl-CoA dehydrogenase family. L-carnitine dehydrogenase subfamily. In terms of assembly, homodimer.

The protein resides in the cytoplasm. It carries out the reaction carnitine + NAD(+) = 3-dehydrocarnitine + NADH + H(+). Its pathway is amine and polyamine metabolism; carnitine metabolism. Functionally, catalyzes the NAD(+)-dependent oxidation of L-carnitine to 3-dehydrocarnitine. The protein is L-carnitine dehydrogenase of Oceanobacillus iheyensis (strain DSM 14371 / CIP 107618 / JCM 11309 / KCTC 3954 / HTE831).